The primary structure comprises 492 residues: Probable cobyric acid synthase (492 aa).

The region spanning 252 to 444 (PIEVNIVKFS…FHGILENFEF (193 aa)) is the GATase cobBQ-type domain. Cys330 (nucleophile) is an active-site residue. His436 is an active-site residue.

Belongs to the CobB/CobQ family. CobQ subfamily.

The protein operates within cofactor biosynthesis; adenosylcobalamin biosynthesis. Its function is as follows. Catalyzes amidations at positions B, D, E, and G on adenosylcobyrinic A,C-diamide. NH(2) groups are provided by glutamine, and one molecule of ATP is hydrogenolyzed for each amidation. This Methanococcus maripaludis (strain C6 / ATCC BAA-1332) protein is Probable cobyric acid synthase.